Here is a 373-residue protein sequence, read N- to C-terminus: Securin (373 aa).

A compositionally biased stretch (basic and acidic residues) spans 1–10 (MMPANEDKEN). Residues 1 to 27 (MMPANEDKENNIVYTGNESSGINFPQT) form a disordered region. Positions 12–26 (IVYTGNESSGINFPQ) are enriched in polar residues. Residues 85 to 88 (RLPL) carry the D-box motif. Positions 177-278 (ADSGKNEESS…LPYVPEGYSP (102 aa)) are disordered. 4 positions are modified to phosphoserine: serine 185, serine 186, serine 212, and serine 213. The span at 185–194 (SSDDDEGNED) shows a compositional bias: acidic residues. Residues 225 to 235 (LFNEQGGLQQL) show a composition bias toward low complexity. The span at 240–256 (TKNEQKTKNDKSDKTDD) shows a compositional bias: basic and acidic residues. Position 277 is a phosphoserine (serine 277). Serine 292 is modified (phosphoserine; by CDC28).

It belongs to the securin family. In terms of assembly, interacts with the caspase-like ESP1, and prevents its protease activity probably by covering its active site. Interacts with CDC20. In terms of processing, phosphorylated by CDC28. The phosphorylation may be important for ESP1 localization to the nucleus. Ubiquitinated by the anaphase promoting complex (APC) at the onset of anaphase, conducting to its degradation.

It localises to the cytoplasm. The protein resides in the nucleus. Its function is as follows. Regulatory protein, which plays a central role in chromosome stability. Probably acts by blocking the action of key proteins. During the mitosis, it blocks Separase/ESP1 function, preventing the proteolysis of the cohesin complex and the subsequent segregation of the chromosomes. At the onset of anaphase, it is ubiquitinated, conducting to its destruction and to the liberation of ESP1. The protein is Securin (PDS1) of Saccharomyces cerevisiae (strain ATCC 204508 / S288c) (Baker's yeast).